The following is a 748-amino-acid chain: Glucans biosynthesis glucosyltransferase H (748 aa).

7 helical membrane passes run 85-107, 127-149, 443-465, 494-516, 529-551, 587-606, and 608-630; these read LIVRRLFIFVGTALLTLAGGYGM, FLVLLAWVAFSFMSALAGFFVLL, GIGSYVTAPLWLLFLLVGLLISL, AWVFAATMGLLILPKLLAYLVLI, GRVLAGVVCEAFVAALLAPCMMI, LAGPTLCGLVLSVCAYSVSL, and LLLWMSPVVLGLLLSIPLGIMTS.

This sequence belongs to the glycosyltransferase 2 family. OpgH subfamily.

It localises to the cell inner membrane. It functions in the pathway glycan metabolism; osmoregulated periplasmic glucan (OPG) biosynthesis. Involved in the biosynthesis of osmoregulated periplasmic glucans (OPGs). In Bradyrhizobium diazoefficiens (strain JCM 10833 / BCRC 13528 / IAM 13628 / NBRC 14792 / USDA 110), this protein is Glucans biosynthesis glucosyltransferase H.